Here is a 211-residue protein sequence, read N- to C-terminus: Large ribosomal subunit protein uL3 (211 aa).

Positions 116–142 (GTSGVMKKHGFSGNRASHGVSRNHRLG) are disordered.

It belongs to the universal ribosomal protein uL3 family. As to quaternary structure, part of the 50S ribosomal subunit. Forms a cluster with proteins L14 and L19.

Functionally, one of the primary rRNA binding proteins, it binds directly near the 3'-end of the 23S rRNA, where it nucleates assembly of the 50S subunit. The polypeptide is Large ribosomal subunit protein uL3 (Fusobacterium nucleatum subsp. nucleatum (strain ATCC 25586 / DSM 15643 / BCRC 10681 / CIP 101130 / JCM 8532 / KCTC 2640 / LMG 13131 / VPI 4355)).